A 294-amino-acid chain; its full sequence is Single-stranded nucleic acid-binding protein (294 aa).

The interval 1–30 (MSAEIEEATNAVNNLSINDSEQQPRAPTHK) is disordered. An N-acetylserine modification is found at S2. Phosphoserine is present on residues S2 and S16. The segment covering 10-25 (NAVNNLSINDSEQQPR) has biased composition (polar residues). The RRM 1 domain maps to 37 to 119 (DTIFIGNVAH…REIHIKRART (83 aa)). Phosphothreonine is present on T49. S66 bears the Phosphoserine mark. 2 positions are modified to phosphothreonine: T91 and T119. R125 carries the omega-N-methylarginine modification. The RNA-binding RGG-box stretch occupies residues 131–151 (RGGFRGRGGFRGGFRGGYRGG). Dimethylated arginine is present on residues R135, R137, and R141. Position 145 is a dimethylated arginine; alternate (R145). R145 is modified (omega-N-methylarginine; alternate). R149 carries the post-translational modification Omega-N-methylarginine. The span at 151 to 169 (GFRGRGNFRGRGGARGGFN) shows a compositional bias: gly residues. Positions 151-171 (GFRGRGNFRGRGGARGGFNGQ) are disordered. A dimethylated arginine mark is found at R153, R155, and R159. 2 positions are modified to dimethylated arginine; alternate: R161 and R165. Residues R161 and R165 each carry the omega-N-methylarginine; alternate modification. Positions 186 to 274 (DTLYINNVPF…RELTVDVAVI (89 aa)) constitute an RRM 2 domain. Position 242 is a phosphothreonine (T242). S244 is modified (phosphoserine). The segment at 275 to 294 (RPENDEEEIEQETGSEEKQE) is disordered. Acidic residues predominate over residues 278–288 (NDEEEIEQETG). Phosphothreonine is present on T287. The residue at position 289 (S289) is a Phosphoserine.

Belongs to the RRM GAR family. In terms of assembly, associated with snR10 and snR11 small nuclear RNAs.

The protein resides in the cytoplasm. The protein localises to the nucleus. Its subcellular location is the nucleolus. It is found in the P-body. It localises to the stress granule. In terms of biological role, functions in the transition of mRNAs from translation to an mRNP complex destined for decapping. High-copy-number suppressor of decapping defects. Overexpression suppresses decapping defects in both DCP1-2 and DCP2-7 mutations. Acts to promote translational repression of mRNA in conjunction with DHH1 and subsequent mRNA localization to P bodies. Promotes translational repression of mRNA during glucose deprivation. This is Single-stranded nucleic acid-binding protein (SBP1) from Saccharomyces cerevisiae (strain ATCC 204508 / S288c) (Baker's yeast).